The sequence spans 163 residues: Nucleotide-binding protein Noca_0564 (163 aa).

It belongs to the YajQ family.

Functionally, nucleotide-binding protein. The sequence is that of Nucleotide-binding protein Noca_0564 from Nocardioides sp. (strain ATCC BAA-499 / JS614).